The primary structure comprises 463 residues: HEPACAM family member 2 (463 aa).

An N-terminal signal peptide occupies residues 1–32 (MGQDAFMELLRSMVGLSLCKIHLLLIAGSCLG). Asparagine 86, asparagine 130, and asparagine 166 each carry an N-linked (GlcNAc...) asparagine glycan. Ig-like C2-type domains lie at 150–234 (PMVQ…SDII) and 236–332 (PTIY…TRFT). 2 disulfides stabilise this stretch: cysteine 171-cysteine 220 and cysteine 271-cysteine 316. The N-linked (GlcNAc...) asparagine glycan is linked to asparagine 321. The chain crosses the membrane as a helical span at residues 353-373 (LASITGISLFLIISMCLLFLW). Residues 374-463 (KKYQPYKAIR…IPEQQQENTE (90 aa)) lie on the Cytoplasmic side of the membrane.

Poly-ADP-ribosylated (PARsylated) by tankyrase TNKS during late G2 and prophase, leading to translocation to mitotic centrosomes. Post-translationally, N-glycosylated.

Its subcellular location is the golgi apparatus membrane. The protein resides in the cytoplasm. It is found in the cytoskeleton. It localises to the spindle. The protein localises to the microtubule organizing center. Its subcellular location is the centrosome. The protein resides in the midbody. Its function is as follows. Required during prometaphase for centrosome maturation. Following poly-ADP-ribosylation (PARsylation) by TNKS, translocates from the Golgi apparatus to mitotic centrosomes and plays a key role in the formation of robust microtubules for prompt movement of chromosomes: anchors AKAP9/CG-NAP, a scaffold protein of the gamma-tubulin ring complex and promotes centrosome maturation. In Mus musculus (Mouse), this protein is HEPACAM family member 2 (Hepacam2).